A 409-amino-acid chain; its full sequence is F-box/kelch-repeat protein At2g44130 (409 aa).

The F-box domain maps to 17–63 (HELIPGLPSELALECLVRVPFQFQSAMRSVCRSWRSLLSDSSFIQER). Kelch repeat units lie at residues 98 to 148 (KKSE…VLQD), 151 to 199 (KILL…SVSP), 201 to 248 (KVYV…AVGM), and 251 to 300 (RFCV…RTAG).

The sequence is that of F-box/kelch-repeat protein At2g44130 from Arabidopsis thaliana (Mouse-ear cress).